Consider the following 138-residue polypeptide: ATP synthase epsilon chain 1 (138 aa).

It belongs to the ATPase epsilon chain family. As to quaternary structure, F-type ATPases have 2 components, CF(1) - the catalytic core - and CF(0) - the membrane proton channel. CF(1) has five subunits: alpha(3), beta(3), gamma(1), delta(1), epsilon(1). CF(0) has three main subunits: a, b and c.

It localises to the cell inner membrane. Produces ATP from ADP in the presence of a proton gradient across the membrane. The chain is ATP synthase epsilon chain 1 from Syntrophotalea carbinolica (strain DSM 2380 / NBRC 103641 / GraBd1) (Pelobacter carbinolicus).